The chain runs to 211 residues: Methylamine utilization protein MauD (211 aa).

Residues 5–25 (ILIASNVLLWGAFLALAALML) form a helical membrane-spanning segment. The region spanning 50-187 (PDVGERSPIF…LFETIREGHS (138 aa)) is the Thioredoxin domain.

Its subcellular location is the membrane. Its pathway is one-carbon metabolism; methylamine degradation. Functionally, may be specifically involved in the processing, transport, and/or maturation of the MADH beta-subunit. The protein is Methylamine utilization protein MauD (mauD) of Methylophilus methylotrophus (Bacterium W3A1).